Consider the following 151-residue polypeptide: Actin-depolymerizing factor 10 (151 aa).

Residues 15-149 (PAWIEVPEKS…DLEVLRGRAN (135 aa)) enclose the ADF-H domain.

This sequence belongs to the actin-binding proteins ADF family.

Its function is as follows. Actin-depolymerizing protein. Severs actin filaments (F-actin) and binds to actin monomers. The chain is Actin-depolymerizing factor 10 (ADF10) from Oryza sativa subsp. japonica (Rice).